The sequence spans 256 residues: Small ribosomal subunit protein uS3 (256 aa).

A KH type-2 domain is found at 39–121; it reads IRTYLTKQLS…TIRINVVEVT (83 aa). Residues 227 to 256 are disordered; sequence RHEQKFPLQQPKRRQQRRRPTFEDRSAQEA. Over residues 246 to 256 the composition is skewed to basic and acidic residues; the sequence is PTFEDRSAQEA.

This sequence belongs to the universal ribosomal protein uS3 family. As to quaternary structure, part of the 30S ribosomal subunit. Forms a tight complex with proteins S10 and S14.

Its function is as follows. Binds the lower part of the 30S subunit head. Binds mRNA in the 70S ribosome, positioning it for translation. This chain is Small ribosomal subunit protein uS3, found in Synechococcus sp. (strain JA-2-3B'a(2-13)) (Cyanobacteria bacterium Yellowstone B-Prime).